Reading from the N-terminus, the 539-residue chain is Copine-C (539 aa).

C2 domains follow at residues 1–120 and 128–251; these read MIPS…KIVA and VTGK…PLIN. Ca(2+) is bound by residues Leu-23, Asp-24, Asp-30, Asp-83, Asp-85, and Asp-98. Positions 290 to 507 constitute a VWFA domain; sequence SLMTAIDCTG…ALAQETLKEI (218 aa).

It belongs to the copine family. The cofactor is Ca(2+).

In Dictyostelium discoideum (Social amoeba), this protein is Copine-C (cpnC).